The following is a 469-amino-acid chain: 1-aminocyclopropane-1-carboxylate synthase 8 (469 aa).

Residues Glu47 and Tyr85 each coordinate substrate. Lys272 is modified (N6-(pyridoxal phosphate)lysine).

The protein belongs to the class-I pyridoxal-phosphate-dependent aminotransferase family. In terms of assembly, homodimer and heterodimer. In vivo, the relevance of heterodimerization with other ACS enzymes is however unsure. Interacts with GRF3. It depends on pyridoxal 5'-phosphate as a cofactor. In terms of processing, may be processed at its C-terminus. Expressed in roots. Expressed at low level in flowers and siliques.

It catalyses the reaction S-adenosyl-L-methionine = 1-aminocyclopropane-1-carboxylate + S-methyl-5'-thioadenosine + H(+). It functions in the pathway alkene biosynthesis; ethylene biosynthesis via S-adenosyl-L-methionine; ethylene from S-adenosyl-L-methionine: step 1/2. Its function is as follows. 1-aminocyclopropane-1-carboxylate synthase (ACS) enzymes catalyze the conversion of S-adenosyl-L-methionine (SAM) into 1-aminocyclopropane-1-carboxylate (ACC), a direct precursor of ethylene. The protein is 1-aminocyclopropane-1-carboxylate synthase 8 (ACS8) of Arabidopsis thaliana (Mouse-ear cress).